A 345-amino-acid polypeptide reads, in one-letter code: Phosphoribosylformylglycinamidine cyclo-ligase (345 aa).

The protein belongs to the AIR synthase family.

The protein localises to the cytoplasm. It carries out the reaction 2-formamido-N(1)-(5-O-phospho-beta-D-ribosyl)acetamidine + ATP = 5-amino-1-(5-phospho-beta-D-ribosyl)imidazole + ADP + phosphate + H(+). It functions in the pathway purine metabolism; IMP biosynthesis via de novo pathway; 5-amino-1-(5-phospho-D-ribosyl)imidazole from N(2)-formyl-N(1)-(5-phospho-D-ribosyl)glycinamide: step 2/2. The sequence is that of Phosphoribosylformylglycinamidine cyclo-ligase from Pasteurella multocida (strain Pm70).